The following is a 256-amino-acid chain: ATP synthase peripheral stalk subunit b, mitochondrial (256 aa).

The N-terminal 42 residues, 1 to 42, are a transit peptide targeting the mitochondrion; the sequence is MLSRVVLSAAATAAPCLKNAAVLGPGVLQATRVFHTGQPRLA. Position 131 is an N6-succinyllysine (Lys-131). N6-acetyllysine is present on residues Lys-139, Lys-154, Lys-162, Lys-221, Lys-233, and Lys-244.

The protein belongs to the eukaryotic ATPase B chain family. In terms of assembly, component of the ATP synthase complex composed at least of ATP5F1A/subunit alpha, ATP5F1B/subunit beta, ATP5MC1/subunit c (homooctomer), MT-ATP6/subunit a, MT-ATP8/subunit 8, ATP5ME/subunit e, ATP5MF/subunit f, ATP5MG/subunit g, ATP5MK/subunit k, ATP5MJ/subunit j, ATP5F1C/subunit gamma, ATP5F1D/subunit delta, ATP5F1E/subunit epsilon, ATP5PF/subunit F6, ATP5PB/subunit b, ATP5PD/subunit d, ATP5PO/subunit OSCP. ATP synthase complex consists of a soluble F(1) head domain (subunits alpha(3) and beta(3)) - the catalytic core - and a membrane F(0) domain - the membrane proton channel (subunits c, a, 8, e, f, g, k and j). These two domains are linked by a central stalk (subunits gamma, delta, and epsilon) rotating inside the F1 region and a stationary peripheral stalk (subunits F6, b, d, and OSCP).

The protein localises to the mitochondrion. It localises to the mitochondrion inner membrane. In terms of biological role, subunit b, of the mitochondrial membrane ATP synthase complex (F(1)F(0) ATP synthase or Complex V) that produces ATP from ADP in the presence of a proton gradient across the membrane which is generated by electron transport complexes of the respiratory chain. ATP synthase complex consist of a soluble F(1) head domain - the catalytic core - and a membrane F(1) domain - the membrane proton channel. These two domains are linked by a central stalk rotating inside the F(1) region and a stationary peripheral stalk. During catalysis, ATP synthesis in the catalytic domain of F(1) is coupled via a rotary mechanism of the central stalk subunits to proton translocation. In vivo, can only synthesize ATP although its ATP hydrolase activity can be activated artificially in vitro. Part of the complex F(0) domain. Part of the complex F(0) domain and the peripheric stalk, which acts as a stator to hold the catalytic alpha(3)beta(3) subcomplex and subunit a/ATP6 static relative to the rotary elements. The chain is ATP synthase peripheral stalk subunit b, mitochondrial from Rattus norvegicus (Rat).